The primary structure comprises 102 residues: MDIKQTAVAGSLESSDLMITVSPNDEKTITITLDSSVEKQFGNHIRQLIHQTLVNLKVTAAKVEAVDKGALDCTIQARTIAAVHRAAGVDQYDWKEIDSWNV.

S14 carries the O-(phosphoribosyl dephospho-coenzyme A)serine modification.

The protein belongs to the CitD family. Oligomer with a subunit composition of (alpha,beta,gamma)6.

It is found in the cytoplasm. Functionally, covalent carrier of the coenzyme of citrate lyase. The polypeptide is Citrate lyase acyl carrier protein (Streptococcus pyogenes serotype M4 (strain MGAS10750)).